The following is a 288-amino-acid chain: MVKITILSPEGRSCSVWSLKNEIEKLGAKCDIFLLSSPENLMSHDFKLETDLIHSRCGIGDYFDRLTLYSWQFINALEVEGCRFINPIKTLYLTSDKFKCIKLLAKNKIKTPKTALIRDYEDAVKFIEKYNLRFPVVIKNSFSKCGLKVFMARNYDELKQLTKNAIWEGKLIQEFIDFKENDLYRDMRILVVDGEVVGGYRRVSRDFRTNLYLGNVVEKLNIDEELEELALKCADLSEAVILGVDILPTKDNYYVIELNSSPGTKGFRDIGINADKKIAEALVRYAKS.

One can recognise an ATP-grasp domain in the interval 101 to 287; that stretch reads IKLLAKNKIK…IAEALVRYAK (187 aa). Residues K139, 173-186, and R202 contribute to the ATP site; that span reads QEFIDFKENDLYRD. Residues D245, E257, and N259 each coordinate Mn(2+).

This sequence belongs to the RimK family. CofF subfamily. Monomer. Mn(2+) serves as cofactor.

It carries out the reaction oxidized coenzyme F420-2 + L-glutamate + ATP = oxidized coenzyme alpha-F420-3 + ADP + phosphate + H(+). It participates in cofactor biosynthesis; coenzyme F420 biosynthesis. With respect to regulation, inhibited by KCl. Its function is as follows. Catalyzes the ATP-dependent addition of one alpha-linked L-glutamate molecule to coenzyme gamma-F420-2, producing alpha-F420-3, the major form of coenzyme F420 found in M.jannaschii. Thus, caps the gamma-polyglutamate tail of coenzyme F420 with a terminal alpha-linked glutamate. Prefers ATP to other purine nucleotide triphosphates; GTP gives about 25% of the activity observed with ATP. Cannot catalyze the addition of the following amino acids or analogs: D-glutamate, beta-glutamate, L-aspartate, L-glutamine, L-alpha-aminoadipate, or D,L-2-amino-4-phosphono-butyrate. The polypeptide is Coenzyme gamma-F420-2:alpha-L-glutamate ligase (cofF) (Methanocaldococcus jannaschii (strain ATCC 43067 / DSM 2661 / JAL-1 / JCM 10045 / NBRC 100440) (Methanococcus jannaschii)).